The primary structure comprises 280 residues: Dermonecrotic toxin LgSicTox-alphaIA1 (280 aa).

H12 is an active-site residue. Mg(2+)-binding residues include E32 and D34. Residue H48 is the Nucleophile of the active site. A disulfide bond links C52 and C58. Position 92 (D92) interacts with Mg(2+).

It belongs to the arthropod phospholipase D family. Class I subfamily. The cofactor is Mg(2+). Expressed by the venom gland.

It is found in the secreted. It catalyses the reaction an N-(acyl)-sphingosylphosphocholine = an N-(acyl)-sphingosyl-1,3-cyclic phosphate + choline. It carries out the reaction an N-(acyl)-sphingosylphosphoethanolamine = an N-(acyl)-sphingosyl-1,3-cyclic phosphate + ethanolamine. The catalysed reaction is a 1-acyl-sn-glycero-3-phosphocholine = a 1-acyl-sn-glycero-2,3-cyclic phosphate + choline. The enzyme catalyses a 1-acyl-sn-glycero-3-phosphoethanolamine = a 1-acyl-sn-glycero-2,3-cyclic phosphate + ethanolamine. In terms of biological role, dermonecrotic toxins cleave the phosphodiester linkage between the phosphate and headgroup of certain phospholipids (sphingolipid and lysolipid substrates), forming an alcohol (often choline) and a cyclic phosphate. This toxin acts on sphingomyelin (SM). It may also act on ceramide phosphoethanolamine (CPE), lysophosphatidylcholine (LPC) and lysophosphatidylethanolamine (LPE), but not on lysophosphatidylserine (LPS), and lysophosphatidylglycerol (LPG). It acts by transphosphatidylation, releasing exclusively cyclic phosphate products as second products. Induces dermonecrosis, hemolysis, increased vascular permeability, edema, inflammatory response, and platelet aggregation. The sequence is that of Dermonecrotic toxin LgSicTox-alphaIA1 from Loxosceles gaucho (Spider).